The primary structure comprises 78 residues: Small ribosomal subunit protein bS18 (78 aa).

It belongs to the bacterial ribosomal protein bS18 family. As to quaternary structure, part of the 30S ribosomal subunit. Forms a tight heterodimer with protein bS6.

Its function is as follows. Binds as a heterodimer with protein bS6 to the central domain of the 16S rRNA, where it helps stabilize the platform of the 30S subunit. The polypeptide is Small ribosomal subunit protein bS18 (Thermobifida fusca (strain YX)).